The chain runs to 177 residues: Transmembrane protein 275 (177 aa).

Residues 1–20 (MPQAKKSTETLAPAPPGRSR) are disordered. Helical transmembrane passes span 36 to 56 (GLCVLLAGLNVTLVGAFAAFL) and 63 to 83 (LVVGPALLVLALGFFAACCVC). Residues 113–177 (ESSERTAQDT…LNFPRDPAAS (65 aa)) are disordered. Low complexity predominate over residues 128 to 161 (SPAASAASSGRSSPGPGLFALDPPAPATAAPYLP).

Its subcellular location is the membrane. This Mus musculus (Mouse) protein is Transmembrane protein 275.